Consider the following 216-residue polypeptide: Nucleoside triphosphate pyrophosphatase (216 aa).

Aspartate 86 serves as the catalytic Proton acceptor.

This sequence belongs to the Maf family. It depends on a divalent metal cation as a cofactor.

The protein localises to the cytoplasm. The enzyme catalyses a ribonucleoside 5'-triphosphate + H2O = a ribonucleoside 5'-phosphate + diphosphate + H(+). The catalysed reaction is a 2'-deoxyribonucleoside 5'-triphosphate + H2O = a 2'-deoxyribonucleoside 5'-phosphate + diphosphate + H(+). Nucleoside triphosphate pyrophosphatase. May have a dual role in cell division arrest and in preventing the incorporation of modified nucleotides into cellular nucleic acids. In Dictyostelium discoideum (Social amoeba), this protein is Nucleoside triphosphate pyrophosphatase.